The chain runs to 453 residues: Ribosomal protein uS12 methylthiotransferase RimO (453 aa).

The region spanning 5–120 (PKVGFVSLGC…VMQAVHSHLP (116 aa)) is the MTTase N-terminal domain. 6 residues coordinate [4Fe-4S] cluster: Cys14, Cys50, Cys79, Cys151, Cys155, and Cys158. The region spanning 137-382 (LTPRHYAYLK…MEVAEEVSAQ (246 aa)) is the Radical SAM core domain. One can recognise a TRAM domain in the interval 385 to 453 (QRKVGKTLKV…ADGHDLWGEV (69 aa)).

Belongs to the methylthiotransferase family. RimO subfamily. It depends on [4Fe-4S] cluster as a cofactor.

The protein localises to the cytoplasm. The enzyme catalyses L-aspartate(89)-[ribosomal protein uS12]-hydrogen + (sulfur carrier)-SH + AH2 + 2 S-adenosyl-L-methionine = 3-methylsulfanyl-L-aspartate(89)-[ribosomal protein uS12]-hydrogen + (sulfur carrier)-H + 5'-deoxyadenosine + L-methionine + A + S-adenosyl-L-homocysteine + 2 H(+). In terms of biological role, catalyzes the methylthiolation of an aspartic acid residue of ribosomal protein uS12. This chain is Ribosomal protein uS12 methylthiotransferase RimO, found in Burkholderia ambifaria (strain ATCC BAA-244 / DSM 16087 / CCUG 44356 / LMG 19182 / AMMD) (Burkholderia cepacia (strain AMMD)).